Consider the following 46-residue polypeptide: Photosystem II reaction center protein K (46 aa).

The propeptide occupies 1–9; the sequence is MESILMIFA. The chain crosses the membrane as a helical span at residues 25–45; sequence LPVIPVLFLLLAFVWQAAVSF.

It belongs to the PsbK family. As to quaternary structure, PSII is composed of 1 copy each of membrane proteins PsbA, PsbB, PsbC, PsbD, PsbE, PsbF, PsbH, PsbI, PsbJ, PsbK, PsbL, PsbM, PsbT, PsbX, PsbY, PsbZ, Psb30/Ycf12, at least 3 peripheral proteins of the oxygen-evolving complex and a large number of cofactors. It forms dimeric complexes.

Its subcellular location is the plastid. The protein localises to the chloroplast thylakoid membrane. In terms of biological role, one of the components of the core complex of photosystem II (PSII). PSII is a light-driven water:plastoquinone oxidoreductase that uses light energy to abstract electrons from H(2)O, generating O(2) and a proton gradient subsequently used for ATP formation. It consists of a core antenna complex that captures photons, and an electron transfer chain that converts photonic excitation into a charge separation. This Stigeoclonium helveticum (Green alga) protein is Photosystem II reaction center protein K.